The primary structure comprises 644 residues: Chaperone protein DnaK (644 aa).

Thr-199 carries the post-translational modification Phosphothreonine; by autocatalysis. A disordered region spans residues 589-644; sequence QALAEASHKLAEKMYSQGQGPQAGPGEEPSGQSGGTEKPVEGEVVDAEFEEVKNKK. A compositionally biased stretch (low complexity) spans 604-619; that stretch reads SQGQGPQAGPGEEPSG.

This sequence belongs to the heat shock protein 70 family.

Functionally, acts as a chaperone. This Nitrosospira multiformis (strain ATCC 25196 / NCIMB 11849 / C 71) protein is Chaperone protein DnaK.